The primary structure comprises 500 residues: MSYFPWLTIIVLFPISAGSFIFFLPYKGNKVIRWYTIGICLLELLLITYAFCYFFQLDDPLIQLEEDYKWINFFDFHWRLGIDGLSIGPILLTGFITTLATLAAWPVTQDSRLFHFLMLAMYSGQIGLFSSRDLLLFFIMWELELIPVYLLLSMWGGKKRLYSATKFILYTAGGSIFLLMGVLGMGLYGSNEPILNFETSANQSYPMALEILFYFGFLIAYAVKLPIIPLHTWLPDTHGEAHYSTCMLLAGILLKMGAYGLIRINMELLPHAHSIFSPWLMIVGTVQIIYAASTSFGQRNLKKRIAYSSVSHMGFIIIGICSITDTGLNGAVLQIISHGFIGAALFFLAGTSYDRIRIVYLDEMGGIAIPMPKIFTMFSSFSMASLALPGMSGFVAELIVFFGIITSPKYLLMPKVLITFVMAIGIILTPIYSLSMLRQMFYGYKLFNVPNSYFVDSGPRELFISICILLPVIGIGIYPDFVLSLLGDKVEDILSNYFQR.

14 consecutive transmembrane segments (helical) span residues 4 to 24, 37 to 57, 87 to 107, 113 to 130, 134 to 154, 167 to 187, 208 to 228, 242 to 262, 272 to 292, 305 to 325, 330 to 350, 386 to 406, 416 to 436, and 462 to 482; these read FPWL…IFFL, IGIC…FFQL, IGPI…AWPV, LFHF…GLFS, LLLF…LLSM, FILY…GMGL, ALEI…LPII, HYST…YGLI, AHSI…IYAA, IAYS…SITD, GAVL…FLAG, LALP…GIIT, VLIT…SLSM, and LFIS…PDFV.

Belongs to the complex I subunit 4 family.

The protein localises to the plastid. The protein resides in the chloroplast thylakoid membrane. It catalyses the reaction a plastoquinone + NADH + (n+1) H(+)(in) = a plastoquinol + NAD(+) + n H(+)(out). The enzyme catalyses a plastoquinone + NADPH + (n+1) H(+)(in) = a plastoquinol + NADP(+) + n H(+)(out). This Ceratophyllum demersum (Rigid hornwort) protein is NAD(P)H-quinone oxidoreductase chain 4, chloroplastic.